A 222-amino-acid polypeptide reads, in one-letter code: Small ribosomal subunit protein uS3 (222 aa).

Residues 39–107 (IRKYIKTKFY…QININIAEIK (69 aa)) form the KH type-2 domain.

Belongs to the universal ribosomal protein uS3 family. In terms of assembly, part of the 30S ribosomal subunit. Forms a tight complex with proteins S10 and S14.

Functionally, binds the lower part of the 30S subunit head. Binds mRNA in the 70S ribosome, positioning it for translation. The sequence is that of Small ribosomal subunit protein uS3 from Carboxydothermus hydrogenoformans (strain ATCC BAA-161 / DSM 6008 / Z-2901).